The following is a 303-amino-acid chain: US1 protein (303 aa).

Residues 230–284 (IPAPGRPLPRRRPSEGGMRAPRRRSRAPAPARSTAAAATPPRPGDPRAPAARRAG) are disordered. Over residues 256–268 (APAPARSTAAAAT) the composition is skewed to low complexity.

It belongs to the herpesviridae US2 family.

This chain is US1 protein (US1), found in Equine herpesvirus 1 (strain Kentucky A) (EHV-1).